We begin with the raw amino-acid sequence, 132 residues long: ATP synthase epsilon chain, chloroplastic (132 aa).

Belongs to the ATPase epsilon chain family. As to quaternary structure, F-type ATPases have 2 components, CF(1) - the catalytic core - and CF(0) - the membrane proton channel. CF(1) has five subunits: alpha(3), beta(3), gamma(1), delta(1), epsilon(1). CF(0) has three main subunits: a, b and c.

It localises to the plastid. It is found in the chloroplast thylakoid membrane. Its function is as follows. Produces ATP from ADP in the presence of a proton gradient across the membrane. This Coffea arabica (Arabian coffee) protein is ATP synthase epsilon chain, chloroplastic.